The chain runs to 134 residues: Acyl carrier protein, chloroplastic (134 aa).

A chloroplast-targeting transit peptide spans 1–51; that stretch reads MATTFSASVSMQATSLATTTRISFQKPVLVSNHGRTNLSFNLSRTRLSISC. Residues 55–130 enclose the Carrier domain; the sequence is QETVEKVSEI…QAAELIEELM (76 aa). Serine 90 bears the O-(pantetheine 4'-phosphoryl)serine mark.

It belongs to the acyl carrier protein (ACP) family. 4'-phosphopantetheine is transferred from CoA to a specific serine of apo-ACP by acpS. This modification is essential for activity because fatty acids are bound in thioester linkage to the sulfhydryl of the prosthetic group. In terms of tissue distribution, seed.

The protein localises to the plastid. The protein resides in the chloroplast. The protein operates within lipid metabolism; fatty acid biosynthesis. Functionally, carrier of the growing fatty acid chain in fatty acid biosynthesis. This Brassica napus (Rape) protein is Acyl carrier protein, chloroplastic (ACL1.C1).